A 295-amino-acid chain; its full sequence is Ribosomal RNA small subunit methyltransferase H (295 aa).

Residues 36 to 38, Asp-56, Leu-90, Asp-104, and His-111 each bind S-adenosyl-L-methionine; that span reads GGH.

Belongs to the methyltransferase superfamily. RsmH family.

The protein resides in the cytoplasm. It catalyses the reaction cytidine(1402) in 16S rRNA + S-adenosyl-L-methionine = N(4)-methylcytidine(1402) in 16S rRNA + S-adenosyl-L-homocysteine + H(+). In terms of biological role, specifically methylates the N4 position of cytidine in position 1402 (C1402) of 16S rRNA. This chain is Ribosomal RNA small subunit methyltransferase H, found in Dictyoglomus turgidum (strain DSM 6724 / Z-1310).